Consider the following 50-residue polypeptide: MSKLMKGRKIRLAKACEQNRRVPAWVMIKTNRAVASHPKRRNWRRSSLKV.

Belongs to the eukaryotic ribosomal protein eL39 family.

The polypeptide is Large ribosomal subunit protein eL39 (Methanoculleus marisnigri (strain ATCC 35101 / DSM 1498 / JR1)).